Reading from the N-terminus, the 84-residue chain is MELSQYLNYAFSLAYYIIIHLLCLSYIYEIIHKHKNVFVRPSKLEDALPLYKTGKNTNKEGDLRLISFIPLLLKSVKHSIRVYT.

The chain crosses the membrane as a helical span at residues 10–32 (AFSLAYYIIIHLLCLSYIYEIIH).

The protein resides in the membrane. This is an uncharacterized protein from Saccharomyces cerevisiae (strain ATCC 204508 / S288c) (Baker's yeast).